Reading from the N-terminus, the 110-residue chain is Large ribosomal subunit protein uL24 (110 aa).

This sequence belongs to the universal ribosomal protein uL24 family. In terms of assembly, part of the 50S ribosomal subunit.

One of two assembly initiator proteins, it binds directly to the 5'-end of the 23S rRNA, where it nucleates assembly of the 50S subunit. In terms of biological role, one of the proteins that surrounds the polypeptide exit tunnel on the outside of the subunit. The sequence is that of Large ribosomal subunit protein uL24 from Roseiflexus castenholzii (strain DSM 13941 / HLO8).